A 368-amino-acid polypeptide reads, in one-letter code: Protein-glutamate methylesterase/protein-glutamine glutaminase (368 aa).

The Response regulatory domain occupies Arg9 to Glu126. Asp60 is modified (4-aspartylphosphate). Residues Ser161–Ile354 form the CheB-type methylesterase domain. Active-site residues include Ser173, His200, and Asp296.

It belongs to the CheB family. Phosphorylated by CheA. Phosphorylation of the N-terminal regulatory domain activates the methylesterase activity.

Its subcellular location is the cytoplasm. The enzyme catalyses [protein]-L-glutamate 5-O-methyl ester + H2O = L-glutamyl-[protein] + methanol + H(+). The catalysed reaction is L-glutaminyl-[protein] + H2O = L-glutamyl-[protein] + NH4(+). Its function is as follows. Involved in chemotaxis. Part of a chemotaxis signal transduction system that modulates chemotaxis in response to various stimuli. Catalyzes the demethylation of specific methylglutamate residues introduced into the chemoreceptors (methyl-accepting chemotaxis proteins or MCP) by CheR. Also mediates the irreversible deamidation of specific glutamine residues to glutamic acid. In Pyrococcus abyssi (strain GE5 / Orsay), this protein is Protein-glutamate methylesterase/protein-glutamine glutaminase.